The chain runs to 145 residues: UPF0735 ACT domain-containing protein CKL_0858 (145 aa).

The 76-residue stretch at 69 to 144 (TLGLTLAHKA…SVIKVNLAAV (76 aa)) folds into the ACT domain.

It belongs to the UPF0735 family.

The protein is UPF0735 ACT domain-containing protein CKL_0858 of Clostridium kluyveri (strain ATCC 8527 / DSM 555 / NBRC 12016 / NCIMB 10680 / K1).